A 274-amino-acid polypeptide reads, in one-letter code: DegV domain-containing protein Cgl2349/cg2579 (274 aa).

Residues 3–259 enclose the DegV domain; that stretch reads VRVIVDSSAC…PGAVSVSAVF (257 aa). Residues T39 and S73 each coordinate hexadecanoate.

Monomer.

Binds long-chain fatty acids, such as palmitate, and may play a role in lipid transport or fatty acid metabolism. This Corynebacterium glutamicum (strain ATCC 13032 / DSM 20300 / JCM 1318 / BCRC 11384 / CCUG 27702 / LMG 3730 / NBRC 12168 / NCIMB 10025 / NRRL B-2784 / 534) protein is DegV domain-containing protein Cgl2349/cg2579.